Consider the following 715-residue polypeptide: Lactococcin transport/processing ATP-binding protein LcnC-like (715 aa).

The 128-residue stretch at 11–138 (QVDEMDCGCA…SEWTGISLFL (128 aa)) folds into the Peptidase C39 domain. Residue C17 is part of the active site. A run of 5 helical transmembrane segments spans residues 167-187 (VILN…LGSY), 197-217 (IPNA…LTYI), 237-257 (LAID…MSFF), 282-302 (TILS…ILGL), and 307-327 (LFLL…IFTP). The region spanning 168-450 (ILNIVIASFI…IINLQTKLQK (283 aa)) is the ABC transmembrane type-1 domain. The ABC transporter domain occupies 482-715 (LNMSEISYQY…NGFYAQLYHN (234 aa)). 515 to 522 (GISGSGKS) contacts ATP.

This sequence belongs to the ABC transporter superfamily. HlyB family.

The protein localises to the cell membrane. In terms of biological role, involved in the export process of a bacteriocin lactococcin. The protein is Lactococcin transport/processing ATP-binding protein LcnC-like (lcnC) of Lactococcus lactis subsp. lactis (strain IL1403) (Streptococcus lactis).